Consider the following 132-residue polypeptide: Large ribosomal subunit protein bL21 (132 aa).

The interval 111 to 132 (AAEKPARKPRAKKTNEVTTDGA) is disordered.

The protein belongs to the bacterial ribosomal protein bL21 family. In terms of assembly, part of the 50S ribosomal subunit. Contacts protein L20.

Functionally, this protein binds to 23S rRNA in the presence of protein L20. The polypeptide is Large ribosomal subunit protein bL21 (Dehalococcoides mccartyi (strain CBDB1)).